The chain runs to 441 residues: 23S rRNA (uracil(1939)-C(5))-methyltransferase RlmD (441 aa).

The TRAM domain occupies 1–56 (MSIDSLDMEARGVGRLLNEDGTPGKVIFVEGALPGETVSYRSFRRKPSYEQAHLVE). The [4Fe-4S] cluster site is built by C69, C75, C78, and C157. Residues Q265, F294, N299, E315, N343, and D364 each coordinate S-adenosyl-L-methionine. C397 acts as the Nucleophile in catalysis.

It belongs to the class I-like SAM-binding methyltransferase superfamily. RNA M5U methyltransferase family. RlmD subfamily.

It catalyses the reaction uridine(1939) in 23S rRNA + S-adenosyl-L-methionine = 5-methyluridine(1939) in 23S rRNA + S-adenosyl-L-homocysteine + H(+). Functionally, catalyzes the formation of 5-methyl-uridine at position 1939 (m5U1939) in 23S rRNA. The sequence is that of 23S rRNA (uracil(1939)-C(5))-methyltransferase RlmD from Cupriavidus necator (strain ATCC 17699 / DSM 428 / KCTC 22496 / NCIMB 10442 / H16 / Stanier 337) (Ralstonia eutropha).